The chain runs to 402 residues: Putative F-box/kelch-repeat protein At1g61540 (402 aa).

The F-box domain maps to 24–70 (PISIMSLPYDLLLNCFSLVSRLYYPTLSLVSKTFRSIITSRELYEIR). Kelch repeat units lie at residues 135–189 (NIYK…CEVD), 191–240 (KIYI…EVKS), and 246–293 (KIYM…VVDN).

This Arabidopsis thaliana (Mouse-ear cress) protein is Putative F-box/kelch-repeat protein At1g61540.